We begin with the raw amino-acid sequence, 345 residues long: uncharacterized protein (345 aa).

A domain (TBDR plug) is located at residue M1. In terms of domain architecture, TBDR beta-barrel spans 1–345 (MDLGPIYNTR…EVILNTKIEF (345 aa)). Residues 328-345 (PVALGYAREVILNTKIEF) carry the TonB C-terminal box motif.

This sequence belongs to the TonB-dependent receptor family.

It localises to the cell outer membrane. This is an uncharacterized protein from Haemophilus influenzae (strain ATCC 51907 / DSM 11121 / KW20 / Rd).